Here is a 103-residue protein sequence, read N- to C-terminus: Large ribosomal subunit protein mL41 (103 aa).

It belongs to the mitochondrion-specific ribosomal protein mL41 family. In terms of assembly, component of the mitochondrial large ribosomal subunit (mt-LSU). Mature N.crassa 74S mitochondrial ribosomes consist of a small (37S) and a large (54S) subunit. The 37S small subunit contains a 16S ribosomal RNA (16S mt-rRNA) and 32 different proteins. The 54S large subunit contains a 23S rRNA (23S mt-rRNA) and 42 different proteins.

Its subcellular location is the mitochondrion. Its function is as follows. Component of the mitochondrial ribosome (mitoribosome), a dedicated translation machinery responsible for the synthesis of mitochondrial genome-encoded proteins, including at least some of the essential transmembrane subunits of the mitochondrial respiratory chain. The mitoribosomes are attached to the mitochondrial inner membrane and translation products are cotranslationally integrated into the membrane. The polypeptide is Large ribosomal subunit protein mL41 (mrpl27) (Neurospora crassa (strain ATCC 24698 / 74-OR23-1A / CBS 708.71 / DSM 1257 / FGSC 987)).